The following is a 182-amino-acid chain: Ribosome-recycling factor (182 aa).

Belongs to the RRF family.

It is found in the cytoplasm. Its function is as follows. Responsible for the release of ribosomes from messenger RNA at the termination of protein biosynthesis. May increase the efficiency of translation by recycling ribosomes from one round of translation to another. This Prochlorococcus marinus (strain SARG / CCMP1375 / SS120) protein is Ribosome-recycling factor.